A 320-amino-acid polypeptide reads, in one-letter code: Lipoyl synthase (320 aa).

7 residues coordinate [4Fe-4S] cluster: Cys-67, Cys-72, Cys-78, Cys-93, Cys-97, Cys-100, and Ser-307. One can recognise a Radical SAM core domain in the interval 79-296 (FNHGTATFMI…RDKANEMGFE (218 aa)).

It belongs to the radical SAM superfamily. Lipoyl synthase family. [4Fe-4S] cluster serves as cofactor.

It localises to the cytoplasm. The catalysed reaction is [[Fe-S] cluster scaffold protein carrying a second [4Fe-4S](2+) cluster] + N(6)-octanoyl-L-lysyl-[protein] + 2 oxidized [2Fe-2S]-[ferredoxin] + 2 S-adenosyl-L-methionine + 4 H(+) = [[Fe-S] cluster scaffold protein] + N(6)-[(R)-dihydrolipoyl]-L-lysyl-[protein] + 4 Fe(3+) + 2 hydrogen sulfide + 2 5'-deoxyadenosine + 2 L-methionine + 2 reduced [2Fe-2S]-[ferredoxin]. It functions in the pathway protein modification; protein lipoylation via endogenous pathway; protein N(6)-(lipoyl)lysine from octanoyl-[acyl-carrier-protein]: step 2/2. Functionally, catalyzes the radical-mediated insertion of two sulfur atoms into the C-6 and C-8 positions of the octanoyl moiety bound to the lipoyl domains of lipoate-dependent enzymes, thereby converting the octanoylated domains into lipoylated derivatives. The sequence is that of Lipoyl synthase from Haemophilus influenzae (strain ATCC 51907 / DSM 11121 / KW20 / Rd).